A 123-amino-acid chain; its full sequence is Small ribosomal subunit protein uS12cz/uS12cy (123 aa).

This sequence belongs to the universal ribosomal protein uS12 family. Part of the 30S ribosomal subunit.

It is found in the plastid. It localises to the chloroplast. Its function is as follows. With S4 and S5 plays an important role in translational accuracy. Located at the interface of the 30S and 50S subunits. This chain is Small ribosomal subunit protein uS12cz/uS12cy (rps12-A), found in Nymphaea alba (White water-lily).